The sequence spans 115 residues: Large ribosomal subunit protein uL24 (115 aa).

Disordered regions lie at residues 45 to 77 (VRQSQKNPQGGRLNKEMPMSASNVMLVDPSTGK) and 96 to 115 (KASGESLGQIAPAKASKAAS).

The protein belongs to the universal ribosomal protein uL24 family. As to quaternary structure, part of the 50S ribosomal subunit.

Its function is as follows. One of two assembly initiator proteins, it binds directly to the 5'-end of the 23S rRNA, where it nucleates assembly of the 50S subunit. In terms of biological role, one of the proteins that surrounds the polypeptide exit tunnel on the outside of the subunit. This chain is Large ribosomal subunit protein uL24, found in Rhodopirellula baltica (strain DSM 10527 / NCIMB 13988 / SH1).